We begin with the raw amino-acid sequence, 426 residues long: 3-phosphoshikimate 1-carboxyvinyltransferase (426 aa).

Residues lysine 23, serine 24, and arginine 28 each coordinate 3-phosphoshikimate. Lysine 23 provides a ligand contact to phosphoenolpyruvate. Phosphoenolpyruvate is bound by residues glycine 96 and arginine 124. 3-phosphoshikimate is bound by residues threonine 170, serine 171, glutamine 172, serine 198, aspartate 314, and lysine 341. Glutamine 172 is a binding site for phosphoenolpyruvate. Residue aspartate 314 is the Proton acceptor of the active site. Phosphoenolpyruvate is bound by residues arginine 345, arginine 386, and lysine 411.

This sequence belongs to the EPSP synthase family. In terms of assembly, monomer.

It localises to the cytoplasm. The catalysed reaction is 3-phosphoshikimate + phosphoenolpyruvate = 5-O-(1-carboxyvinyl)-3-phosphoshikimate + phosphate. The protein operates within metabolic intermediate biosynthesis; chorismate biosynthesis; chorismate from D-erythrose 4-phosphate and phosphoenolpyruvate: step 6/7. In terms of biological role, catalyzes the transfer of the enolpyruvyl moiety of phosphoenolpyruvate (PEP) to the 5-hydroxyl of shikimate-3-phosphate (S3P) to produce enolpyruvyl shikimate-3-phosphate and inorganic phosphate. The protein is 3-phosphoshikimate 1-carboxyvinyltransferase of Nostoc punctiforme (strain ATCC 29133 / PCC 73102).